A 531-amino-acid polypeptide reads, in one-letter code: T-complex protein 1 subunit zeta (531 aa).

Ala-2 is modified (N-acetylalanine). At Lys-5 the chain carries N6-acetyllysine. Gly-39 is a binding site for ADP. Gly-39 is a binding site for ATP. Mg(2+) is bound at residue Asp-90. 6 residues coordinate ADP: Gly-91, Thr-92, Thr-93, Ser-94, Thr-158, and Lys-159. Residues Gly-91, Thr-92, and Thr-93 each contribute to the ATP site. Lys-199 carries the N6-acetyllysine modification. Ser-205 is subject to Phosphoserine. Residue Lys-251 forms a Glycyl lysine isopeptide (Lys-Gly) (interchain with G-Cter in SUMO2) linkage. Lys-287, Lys-365, Lys-377, and Lys-388 each carry N6-acetyllysine. Ala-411 is a binding site for ADP. The ATP site is built by Ala-411, Gly-412, Asp-496, and Lys-501. Position 496 (Asp-496) interacts with ADP.

This sequence belongs to the TCP-1 chaperonin family. In terms of assembly, component of the chaperonin-containing T-complex (TRiC), a hexadecamer composed of two identical back-to-back stacked rings enclosing a protein folding chamber. Each ring is made up of eight different subunits: TCP1/CCT1, CCT2, CCT3, CCT4, CCT5, CCT6A/CCT6, CCT7, CCT8. Interacts with PACRG.

Its subcellular location is the cytoplasm. The catalysed reaction is ATP + H2O = ADP + phosphate + H(+). In terms of biological role, component of the chaperonin-containing T-complex (TRiC), a molecular chaperone complex that assists the folding of actin, tubulin and other proteins upon ATP hydrolysis. The TRiC complex mediates the folding of WRAP53/TCAB1, thereby regulating telomere maintenance. In Homo sapiens (Human), this protein is T-complex protein 1 subunit zeta (CCT6A).